The primary structure comprises 341 residues: Biotin synthase (341 aa).

The region spanning 40–267 is the Radical SAM core domain; the sequence is AEIQVSTLLS…RSMVRLSAGR (228 aa). Positions 55, 59, and 62 each coordinate [4Fe-4S] cluster. [2Fe-2S] cluster is bound by residues Cys99, Cys130, Cys190, and Arg262.

Belongs to the radical SAM superfamily. Biotin synthase family. Homodimer. It depends on [4Fe-4S] cluster as a cofactor. Requires [2Fe-2S] cluster as cofactor.

It catalyses the reaction (4R,5S)-dethiobiotin + (sulfur carrier)-SH + 2 reduced [2Fe-2S]-[ferredoxin] + 2 S-adenosyl-L-methionine = (sulfur carrier)-H + biotin + 2 5'-deoxyadenosine + 2 L-methionine + 2 oxidized [2Fe-2S]-[ferredoxin]. It participates in cofactor biosynthesis; biotin biosynthesis; biotin from 7,8-diaminononanoate: step 2/2. In terms of biological role, catalyzes the conversion of dethiobiotin (DTB) to biotin by the insertion of a sulfur atom into dethiobiotin via a radical-based mechanism. This is Biotin synthase from Xylella fastidiosa (strain 9a5c).